Here is a 37-residue protein sequence, read N- to C-terminus: Large ribosomal subunit protein bL36 (37 aa).

This sequence belongs to the bacterial ribosomal protein bL36 family.

The polypeptide is Large ribosomal subunit protein bL36 (Vesicomyosocius okutanii subsp. Calyptogena okutanii (strain HA)).